The sequence spans 594 residues: Pre-mRNA-processing protein 45 (594 aa).

Disordered regions lie at residues 36 to 63 (TTEY…RKGW), 223 to 254 (PPRF…TAQD), 370 to 426 (ETGI…SEMR), 498 to 523 (AGSS…SKDR), and 566 to 594 (EQFM…ARDE). 2 stretches are compositionally biased toward pro residues: residues 44-53 (APLPATPGPQ) and 235-244 (PAEPPPPVLQ). Acidic residues predominate over residues 383-397 (GSEEESDEEEEDEEA). Basic and acidic residues-rich tracts occupy residues 398–417 (IRER…KEMR), 513–523 (EGIKEEMSKDR), and 578–594 (RTAE…ARDE).

Belongs to the SNW family. In terms of assembly, associated with the spliceosome.

It is found in the nucleus. Functionally, involved in pre-mRNA splicing. The polypeptide is Pre-mRNA-processing protein 45 (PRP45) (Cryptococcus neoformans var. neoformans serotype D (strain B-3501A) (Filobasidiella neoformans)).